The chain runs to 136 residues: ATP synthase F(0) complex subunit C1, mitochondrial (136 aa).

A mitochondrion-targeting transit peptide spans 1–61 (MQTTKALLIS…REFQTSVISR (61 aa)). A helical membrane pass occupies residues 77–97 (VGVAGSGAGIGTVFGSLIIGY). Lysine 104 is subject to N6,N6,N6-trimethyllysine. Residues 112–132 (ILGFALSEAMGLFCLMVAFLI) traverse the membrane as a helical segment.

It belongs to the ATPase C chain family. In terms of assembly, homooctamer; the c-ring consists of eight c subunits forming a circle, and each subunit adopts a hairpin shape. Component of the ATP synthase complex composed at least of ATP5F1A/subunit alpha, ATP5F1B/subunit beta, ATP5MC1/subunit c (homooctomer), MT-ATP6/subunit a, MT-ATP8/subunit 8, ATP5ME/subunit e, ATP5MF/subunit f, ATP5MG/subunit g, ATP5MK/subunit k, ATP5MJ/subunit j, ATP5F1C/subunit gamma, ATP5F1D/subunit delta, ATP5F1E/subunit epsilon, ATP5PF/subunit F6, ATP5PB/subunit b, ATP5PD/subunit d, ATP5PO/subunit OSCP. ATP synthase complex consists of a soluble F(1) head domain (subunits alpha(3) and beta(3)) - the catalytic core - and a membrane F(0) domain - the membrane proton channel (subunits c, a, 8, e, f, g, k and j). These two domains are linked by a central stalk (subunits gamma, delta, and epsilon) rotating inside the F1 region and a stationary peripheral stalk (subunits F6, b, d, and OSCP). Interacts with TMEM70 (homooligomer form); this interaction facilitates the oligomer formation of subunit c/ATP5MC1 (c-ring) and the c-ring membrane insertion and also protects ATP5MC1 against intramitochondrial proteolysis. Trimethylated by ATPSCKMT at Lys-104. Methylation is required for proper incorporation of the C subunit into the ATP synthase complex and mitochondrial respiration.

It localises to the mitochondrion membrane. The enzyme catalyses H(+)(in) = H(+)(out). Subunit c, of the mitochondrial membrane ATP synthase complex (F(1)F(0) ATP synthase or Complex V) that produces ATP from ADP in the presence of a proton gradient across the membrane which is generated by electron transport complexes of the respiratory chain. ATP synthase complex consist of a soluble F(1) head domain - the catalytic core - and a membrane F(1) domain - the membrane proton channel. These two domains are linked by a central stalk rotating inside the F(1) region and a stationary peripheral stalk. During catalysis, ATP synthesis in the catalytic domain of F(1) is coupled via a rotary mechanism of the central stalk subunits to proton translocation. With the subunit a (MT-ATP6), forms the proton-conducting channel in the F(0) domain, that contains two crucial half-channels (inlet and outlet) that facilitate proton movement from the mitochondrial intermembrane space (IMS) into the matrix. Protons are taken up via the inlet half-channel and released through the outlet half-channel, following a Grotthuss mechanism. The chain is ATP synthase F(0) complex subunit C1, mitochondrial from Rattus norvegicus (Rat).